The sequence spans 228 residues: Small ribosomal subunit protein uS3 (228 aa).

Residues 39–107 form the KH type-2 domain; it reads VREYLQDKLK…PVHINIEEIR (69 aa).

This sequence belongs to the universal ribosomal protein uS3 family. As to quaternary structure, part of the 30S ribosomal subunit. Forms a tight complex with proteins S10 and S14.

Its function is as follows. Binds the lower part of the 30S subunit head. Binds mRNA in the 70S ribosome, positioning it for translation. The protein is Small ribosomal subunit protein uS3 of Pseudomonas syringae pv. syringae (strain B728a).